Consider the following 417-residue polypeptide: Putative UDP-arabinose 4-epimerase 2 (417 aa).

The Cytoplasmic portion of the chain corresponds to 1-31; sequence MLNLGRARTGRQNRSMSFEGLDFADPKKNNN. The chain crosses the membrane as a helical; Signal-anchor for type II membrane protein span at residues 32-54; it reads YMGKIVLVMTLTAMCILLLNQSP. Residues 55 to 417 lie on the Lumenal side of the membrane; that stretch reads TFNTPSVFSR…YGSSSLVSAY (363 aa). An NAD(+)-binding site is contributed by 71–102; it reads HVLVTGGAGYIGSHAALRLLKDSYRVTIVDNL. The active-site Proton acceptor is Y219.

This sequence belongs to the NAD(P)-dependent epimerase/dehydratase family. NAD(+) serves as cofactor.

The protein resides in the golgi apparatus. Its subcellular location is the golgi stack membrane. It carries out the reaction UDP-beta-L-arabinopyranose = UDP-alpha-D-xylose. Its pathway is nucleotide-sugar biosynthesis; UDP-L-arabinose biosynthesis; UDP-L-arabinose from UDP-alpha-D-xylose: step 1/1. It functions in the pathway cell wall biogenesis; cell wall polysaccharide biosynthesis. The polypeptide is Putative UDP-arabinose 4-epimerase 2 (Arabidopsis thaliana (Mouse-ear cress)).